The sequence spans 344 residues: MSQSLFSLAFGVGTQNRQEAWLEVFYALPLLKPSSEIVAAVAPILGYAAGNQALTFTSQQAYQLADALKGIDAAQSALLSRLAESQKPLVATLLAEDAAPSSTAEAYLKLHLLSHRLVKPHAVNLSGIFPLLPNVAWTNIGAVDLAELAELQLEARLKGKLLEVFSVDKFPKMTDYVVPAGVRIADTARVRLGAYIGEGTTVMHEGFVNFNAGTEGPGMIEGRVSAGVFVGKGSDLGGGCSTMGTLSGGGNIVISVGEGCLIGANAGIGIPLGDRNIVEAGLYITAGTKVALLDEQNALVKVVKARDLAGQPDLLFRRNSQNGAVECKTNKTAIELNEALHAHN.

Glu-205 contributes to the Mg(2+) binding site. Residue Glu-221 is the Acyl-anhydride intermediate of the active site. Succinyl-CoA contacts are provided by residues Arg-223, Gly-238, Ser-241, Ala-264, 279-280, 287-289, Lys-304, and 317-320; these read EA, GTK, and RRNS.

The protein belongs to the type 2 tetrahydrodipicolinate N-succinyltransferase family. As to quaternary structure, homotrimer. It depends on Magnesium ions are not essential for catalysis. as a cofactor.

It is found in the cytoplasm. The catalysed reaction is (S)-2,3,4,5-tetrahydrodipicolinate + succinyl-CoA + H2O = (S)-2-succinylamino-6-oxoheptanedioate + CoA. Its pathway is amino-acid biosynthesis; L-lysine biosynthesis via DAP pathway; LL-2,6-diaminopimelate from (S)-tetrahydrodipicolinate (succinylase route): step 1/3. With respect to regulation, weakly inhibited by D-2-aminopimelate. In terms of biological role, catalyzes the conversion of the cyclic tetrahydrodipicolinate (THDP) into the acyclic N-succinyl-L-2-amino-6-oxopimelate using succinyl-CoA. Displays succinyl transferase activity with L-2-aminopimelate and succinyl-CoA as substrates. The protein is 2,3,4,5-tetrahydropyridine-2,6-dicarboxylate N-succinyltransferase of Pseudomonas aeruginosa (strain ATCC 15692 / DSM 22644 / CIP 104116 / JCM 14847 / LMG 12228 / 1C / PRS 101 / PAO1).